Here is a 319-residue protein sequence, read N- to C-terminus: Beta-ketoacyl-[acyl-carrier-protein] synthase III (319 aa).

Active-site residues include cysteine 113 and histidine 246. Residues 247–251 (QANIR) form an ACP-binding region. Residue asparagine 276 is part of the active site.

Belongs to the thiolase-like superfamily. FabH family. As to quaternary structure, homodimer.

Its subcellular location is the cytoplasm. It carries out the reaction malonyl-[ACP] + acetyl-CoA + H(+) = 3-oxobutanoyl-[ACP] + CO2 + CoA. The protein operates within lipid metabolism; fatty acid biosynthesis. Catalyzes the condensation reaction of fatty acid synthesis by the addition to an acyl acceptor of two carbons from malonyl-ACP. Catalyzes the first condensation reaction which initiates fatty acid synthesis and may therefore play a role in governing the total rate of fatty acid production. Possesses both acetoacetyl-ACP synthase and acetyl transacylase activities. Its substrate specificity determines the biosynthesis of branched-chain and/or straight-chain of fatty acids. This chain is Beta-ketoacyl-[acyl-carrier-protein] synthase III, found in Ehrlichia ruminantium (strain Welgevonden).